The following is a 506-amino-acid chain: ATP synthase subunit alpha (506 aa).

Position 169–176 (169–176 (GDRQTGKT)) interacts with ATP.

The protein belongs to the ATPase alpha/beta chains family. In terms of assembly, F-type ATPases have 2 components, CF(1) - the catalytic core - and CF(0) - the membrane proton channel. CF(1) has five subunits: alpha(3), beta(3), gamma(1), delta(1), epsilon(1). CF(0) has three main subunits: a(1), b(2) and c(9-12). The alpha and beta chains form an alternating ring which encloses part of the gamma chain. CF(1) is attached to CF(0) by a central stalk formed by the gamma and epsilon chains, while a peripheral stalk is formed by the delta and b chains.

Its subcellular location is the cell membrane. The enzyme catalyses ATP + H2O + 4 H(+)(in) = ADP + phosphate + 5 H(+)(out). Produces ATP from ADP in the presence of a proton gradient across the membrane. The alpha chain is a regulatory subunit. The sequence is that of ATP synthase subunit alpha from Lawsonia intracellularis (strain PHE/MN1-00).